The primary structure comprises 186 residues: Interferon beta (186 aa).

Residues 1–21 (MTGRCILQIALLVCFFTTAHS) form the signal peptide. Tyrosine 24 is modified (phosphotyrosine). Asparagine 46, asparagine 101, asparagine 131, and asparagine 136 each carry an N-linked (GlcNAc...) asparagine glycan. A disulfide bridge connects residues cysteine 52 and cysteine 161.

It belongs to the alpha/beta interferon family. In terms of assembly, monomer.

The protein localises to the secreted. In terms of biological role, type I interferon cytokine that plays a key role in the innate immune response to infection, developing tumors and other inflammatory stimuli. Signals via binding to high-affinity (IFNAR2) and low-affinity (IFNAR1) heterodimeric receptor, activating the canonical Jak-STAT signaling pathway resulting in transcriptional activation or repression of interferon-regulated genes that encode the effectors of the interferon response, such as antiviral proteins, regulators of cell proliferation and differentiation, and immunoregulatory proteins. Signals mostly via binding to a IFNAR1-IFNAR2 heterodimeric receptor, but can also function with IFNAR1 alone and independently of Jak-STAT pathways. Elicits a wide variety of responses, including antiviral and antibacterial activities, and can regulate the development of B-cells, myelopoiesis and lipopolysaccharide (LPS)-inducible production of tumor necrosis factor. Plays a role in neuronal homeostasis by regulating dopamine turnover and protecting dopaminergic neurons: acts by promoting neuronal autophagy and alpha-synuclein clearance, thereby preventing dopaminergic neuron loss. IFNB1 is more potent than interferon-alpha (IFN-alpha) in inducing the apoptotic and antiproliferative pathways required for control of tumor cell growth. The protein is Interferon beta (IFNB1) of Felis catus (Cat).